The chain runs to 310 residues: Thiamine-monophosphate kinase (310 aa).

D24, T38, and D39 together coordinate Mg(2+). D46 contacts substrate. D67 and D115 together coordinate Mg(2+). ATP is bound by residues 114–115 and R138; that span reads GD. Residue D203 participates in Mg(2+) binding. S205 contacts ATP. D206 provides a ligand contact to Mg(2+). Substrate contacts are provided by E251 and W306.

It belongs to the thiamine-monophosphate kinase family.

It catalyses the reaction thiamine phosphate + ATP = thiamine diphosphate + ADP. Its pathway is cofactor biosynthesis; thiamine diphosphate biosynthesis; thiamine diphosphate from thiamine phosphate: step 1/1. Its function is as follows. Catalyzes the ATP-dependent phosphorylation of thiamine-monophosphate (TMP) to form thiamine-pyrophosphate (TPP), the active form of vitamin B1. The protein is Thiamine-monophosphate kinase of Nitrosopumilus maritimus (strain SCM1).